Here is a 309-residue protein sequence, read N- to C-terminus: Putative lipid kinase YtlR (309 aa).

Residues 1 to 134 form the DAGKc domain; it reads MSHWFFIINP…FHLGSVNFLQ (134 aa). ATP contacts are provided by residues 9–13, threonine 40, and 69–75; these read NPTAG and GDGTMHE. Positions 229, 232, and 234 each coordinate Mg(2+). The active-site Proton acceptor is the glutamate 289.

This sequence belongs to the diacylglycerol/lipid kinase family. Requires Mg(2+) as cofactor.

Functionally, may catalyze the ATP-dependent phosphorylation of lipids other than diacylglycerol (DAG). In fact, is not able to exhibit diacylglycerol kinase activity in vitro. This chain is Putative lipid kinase YtlR (ytlR), found in Bacillus subtilis (strain 168).